The sequence spans 44 residues: Photosystem I reaction center subunit IX (44 aa).

A helical membrane pass occupies residues 7-27; the sequence is YLSVAPVLSTLWFGSLAGLLI.

Belongs to the PsaJ family.

It is found in the plastid. It localises to the chloroplast thylakoid membrane. May help in the organization of the PsaE and PsaF subunits. The protein is Photosystem I reaction center subunit IX of Lactuca sativa (Garden lettuce).